A 204-amino-acid polypeptide reads, in one-letter code: UPF0637 protein LMHCC_1566 (204 aa).

The protein belongs to the UPF0637 family.

This chain is UPF0637 protein LMHCC_1566, found in Listeria monocytogenes serotype 4a (strain HCC23).